The chain runs to 452 residues: F-box only protein 47 (452 aa).

The 51-residue stretch at 41–91 (FGNFKALPLEIFQIILKYLSVKDISMLSMVSKTVSQHIINYISTSSGSKRL) folds into the F-box domain.

As to quaternary structure, part of a SCF (SKP1-cullin-F-box) protein ligase complex. As to expression, widely expressed, with highest levels in kidney, liver and pancreas. Down-regulated in tumors.

Its function is as follows. Probably recognizes and binds to some phosphorylated proteins and promotes their ubiquitination and degradation. This is F-box only protein 47 from Homo sapiens (Human).